We begin with the raw amino-acid sequence, 425 residues long: UDP-N-acetylglucosamine 1-carboxyvinyltransferase (425 aa).

22–23 (KN) provides a ligand contact to phosphoenolpyruvate. Arg93 lines the UDP-N-acetyl-alpha-D-glucosamine pocket. The Proton donor role is filled by Cys117. Cys117 carries the post-translational modification 2-(S-cysteinyl)pyruvic acid O-phosphothioketal. Residues 122–126 (RPIDL), Asp307, and Val329 contribute to the UDP-N-acetyl-alpha-D-glucosamine site.

This sequence belongs to the EPSP synthase family. MurA subfamily.

The protein resides in the cytoplasm. It carries out the reaction phosphoenolpyruvate + UDP-N-acetyl-alpha-D-glucosamine = UDP-N-acetyl-3-O-(1-carboxyvinyl)-alpha-D-glucosamine + phosphate. It participates in cell wall biogenesis; peptidoglycan biosynthesis. Functionally, cell wall formation. Adds enolpyruvyl to UDP-N-acetylglucosamine. The protein is UDP-N-acetylglucosamine 1-carboxyvinyltransferase of Prosthecochloris aestuarii (strain DSM 271 / SK 413).